A 302-amino-acid polypeptide reads, in one-letter code: GTP cyclohydrolase FolE2 (302 aa).

Residues 1–27 (MPKKQLPPKEERHKLFGSVPPKERTKP) form a disordered region.

The protein belongs to the GTP cyclohydrolase IV family.

It catalyses the reaction GTP + H2O = 7,8-dihydroneopterin 3'-triphosphate + formate + H(+). It functions in the pathway cofactor biosynthesis; 7,8-dihydroneopterin triphosphate biosynthesis; 7,8-dihydroneopterin triphosphate from GTP: step 1/1. Its function is as follows. Converts GTP to 7,8-dihydroneopterin triphosphate. This Oceanobacillus iheyensis (strain DSM 14371 / CIP 107618 / JCM 11309 / KCTC 3954 / HTE831) protein is GTP cyclohydrolase FolE2.